A 67-amino-acid chain; its full sequence is Large ribosomal subunit protein bL35 (67 aa).

A compositionally biased stretch (basic residues) spans 1–16 (MPKMKTKSSAKKRFRV). The segment at 1–23 (MPKMKTKSSAKKRFRVRPGGTVK) is disordered.

Belongs to the bacterial ribosomal protein bL35 family.

In Variovorax paradoxus (strain S110), this protein is Large ribosomal subunit protein bL35.